Reading from the N-terminus, the 82-residue chain is MKNLKKAAAVTMVAGGLIAAGAGMASATDGGAHAHGKAVGSPGVASGNLVQAPIHIPVNAVGNSVNVIGVLNPAFGNLGVNH.

A signal peptide spans Met1–Ala27. The Chaplin domain occupies Ser41–Asn81.

This sequence belongs to the chaplin family. Short chaplin subfamily.

It is found in the cell surface. Its subcellular location is the secreted. The protein resides in the cell wall. It localises to the fimbrium. One of 8 partially redundant surface-active proteins required for efficient formation of aerial mycelium; the short chaplins assemble into a hydrophobic, amyloidal fibrillar surface layer that envelopes and protects aerial hyphae and spores, presumably anchored to the long chaplins. Chaplins have an overlapping function with the surface-active SapB peptide; chaplins are essential on minimal medium while on rich medium both chaplins and SapB are required for efficient aerial hyphae formation. Chaplins are also involved in cell attachment to a hydrophobic surface. Forms amyloid fibrils in vitro probably composed of stacked beta-sheets, at low extracellular concentrations individually restores the ability to form aerial hyphae to a chaplin-deficient strain, but does so less well than other short chaplins. A small chaplin extract (ChpD, ChpE, ChpF, ChpG and ChpH) self-assembles into 2 different amyloids; small fibrils at the air-water interface form an amphipathic membrane that resembles spore-surface structures involved in aerial hyphae formation, and hydrophilic fibrils in solution that resemble the fibers that attach cells to a hydrophobic surface. At the air-water interface the hydrophilic surface is in contact with water (probably equivalent to the peptidoglycan layer), while the hydrophobic face is exposed to the air, making the surface of the aerial hyphae hydrophobic. A minimal chaplin strain capable of forming aerial mycelium/hyphae on minimal medium contains ChpC, ChpE and ChpH. The strain also has restored rodlet formation on the hyphae surface. A second strain with ChpA, ChpD and ChpE makes slightly less robust hyphae. This essential chaplin may coordinate the assembly and/or polymerization of the other chaplins. A small chaplin extract applied to a chaplin-deficient strain restores aerial hyphae formation. The small chaplin extract forms an amyloid-like structure similar to that seen on the surface of cells without rodlets (rdlA-rdlB deletions), and is highly surface active, reducing surface tension from 72 to 26 mJ/m(2), which probably allows escape of hyphae from an aqueous environment into air. The protein is Chaplin-E of Streptomyces coelicolor (strain ATCC BAA-471 / A3(2) / M145).